Reading from the N-terminus, the 514-residue chain is Probable outer membrane protein pmp12 (514 aa).

Residues 1 to 21 (MTILRNFLTCSALFLALPAAA) form the signal peptide.

Belongs to the PMP outer membrane protein family.

It is found in the secreted. Its subcellular location is the cell wall. It localises to the cell outer membrane. This Chlamydia pneumoniae (Chlamydophila pneumoniae) protein is Probable outer membrane protein pmp12 (pmp12).